The chain runs to 607 residues: Glutamine--fructose-6-phosphate aminotransferase [isomerizing] (607 aa).

The Nucleophile; for GATase activity role is filled by Cys2. The region spanning 2–217 is the Glutamine amidotransferase type-2 domain; that stretch reads CGIIGILGKK…DGDWAVLTRE (216 aa). 2 consecutive SIS domains span residues 277–422 and 455–597; these read TVRS…QRGS and ICRD…VDQP. Residue Lys602 is the For Fru-6P isomerization activity of the active site.

As to quaternary structure, homodimer.

It is found in the cytoplasm. It carries out the reaction D-fructose 6-phosphate + L-glutamine = D-glucosamine 6-phosphate + L-glutamate. Functionally, catalyzes the first step in hexosamine metabolism, converting fructose-6P into glucosamine-6P using glutamine as a nitrogen source. The protein is Glutamine--fructose-6-phosphate aminotransferase [isomerizing] of Bartonella quintana (strain Toulouse) (Rochalimaea quintana).